A 207-amino-acid chain; its full sequence is Cytochrome c biogenesis ATP-binding export protein CcmA 1 (207 aa).

One can recognise an ABC transporter domain in the interval 6–207 (LEALDLAGVR…KTSQTVRMGA (202 aa)). Position 38 to 45 (38 to 45 (GENGSGKT)) interacts with ATP.

Belongs to the ABC transporter superfamily. CcmA exporter (TC 3.A.1.107) family. The complex is composed of two ATP-binding proteins (CcmA) and two transmembrane proteins (CcmB).

The protein resides in the cell inner membrane. It carries out the reaction heme b(in) + ATP + H2O = heme b(out) + ADP + phosphate + H(+). Its function is as follows. Part of the ABC transporter complex CcmAB involved in the biogenesis of c-type cytochromes; once thought to export heme, this seems not to be the case, but its exact role is uncertain. Responsible for energy coupling to the transport system. The polypeptide is Cytochrome c biogenesis ATP-binding export protein CcmA 1 (Cupriavidus metallidurans (strain ATCC 43123 / DSM 2839 / NBRC 102507 / CH34) (Ralstonia metallidurans)).